The following is a 158-amino-acid chain: Probable deoxyuridine 5'-triphosphate nucleotidohydrolase (158 aa).

The protein belongs to the dUTPase family. Requires Mg(2+) as cofactor.

The enzyme catalyses dUTP + H2O = dUMP + diphosphate + H(+). It participates in pyrimidine metabolism; dUMP biosynthesis; dUMP from dCTP (dUTP route): step 1/2. Functionally, this enzyme is involved in nucleotide metabolism: it produces dUMP, the immediate precursor of thymidine nucleotides and it decreases the intracellular concentration of dUTP so that uracil cannot be incorporated into DNA. It does probably not deaminate dCTP. The chain is Probable deoxyuridine 5'-triphosphate nucleotidohydrolase from Sulfolobus islandicus rod-shaped virus 1 (SIRV-1).